Consider the following 256-residue polypeptide: Type III pantothenate kinase (256 aa).

6-13 (DIGNSSIV) contributes to the ATP binding site. Substrate-binding positions include Tyr101 and 108–111 (GADR). Asp110 functions as the Proton acceptor in the catalytic mechanism. Position 130 (Asp130) interacts with K(+). An ATP-binding site is contributed by Thr133. Thr185 is a binding site for substrate.

The protein belongs to the type III pantothenate kinase family. Homodimer. The cofactor is NH4(+). Requires K(+) as cofactor.

It localises to the cytoplasm. The enzyme catalyses (R)-pantothenate + ATP = (R)-4'-phosphopantothenate + ADP + H(+). It functions in the pathway cofactor biosynthesis; coenzyme A biosynthesis; CoA from (R)-pantothenate: step 1/5. Functionally, catalyzes the phosphorylation of pantothenate (Pan), the first step in CoA biosynthesis. In Shouchella clausii (strain KSM-K16) (Alkalihalobacillus clausii), this protein is Type III pantothenate kinase.